The following is a 394-amino-acid chain: uncharacterized protein (394 aa).

Helical transmembrane passes span 13–33 (LITT…TTMI), 35–55 (MAPT…VLPT), 73–95 (TTMT…TLTV), 110–130 (ALTV…HMVL), 152–172 (IHMV…PTVL), 179–198 (LMVL…TLTV), 216–236 (VLLA…TVLP), 241–261 (VLMV…HMVL), 267–287 (VLMV…PTVL), 293–313 (VLMV…TLTV), 340–360 (MMTL…VTTI), and 372–392 (ILLC…YVSA).

The protein resides in the membrane. This is an uncharacterized protein from Saccharomyces cerevisiae (strain ATCC 204508 / S288c) (Baker's yeast).